Reading from the N-terminus, the 1368-residue chain is DNA-directed RNA polymerase subunit beta (1368 aa).

It belongs to the RNA polymerase beta chain family. As to quaternary structure, the RNAP catalytic core consists of 2 alpha, 1 beta, 1 beta' and 1 omega subunit. When a sigma factor is associated with the core the holoenzyme is formed, which can initiate transcription.

It catalyses the reaction RNA(n) + a ribonucleoside 5'-triphosphate = RNA(n+1) + diphosphate. Functionally, DNA-dependent RNA polymerase catalyzes the transcription of DNA into RNA using the four ribonucleoside triphosphates as substrates. In Burkholderia mallei (strain SAVP1), this protein is DNA-directed RNA polymerase subunit beta.